The following is a 90-amino-acid chain: MSRTVMCRKYHEELPGLDRPPYPGAKGEDIYNNVSRKAWDEWQKHQTMLINERRLNMMNAEDRKFLQQEMDKFLSGEDYAKADGYVPPSA.

This sequence belongs to the Fe(2+)-trafficking protein family.

Functionally, could be a mediator in iron transactions between iron acquisition and iron-requiring processes, such as synthesis and/or repair of Fe-S clusters in biosynthetic enzymes. The chain is Probable Fe(2+)-trafficking protein from Pseudomonas aeruginosa (strain UCBPP-PA14).